The chain runs to 54 residues: Large ribosomal subunit protein bL33 (54 aa).

It belongs to the bacterial ribosomal protein bL33 family.

This chain is Large ribosomal subunit protein bL33, found in Thermus thermophilus (strain ATCC BAA-163 / DSM 7039 / HB27).